A 197-amino-acid polypeptide reads, in one-letter code: Imidazoleglycerol-phosphate dehydratase (197 aa).

It belongs to the imidazoleglycerol-phosphate dehydratase family.

Its subcellular location is the cytoplasm. It catalyses the reaction D-erythro-1-(imidazol-4-yl)glycerol 3-phosphate = 3-(imidazol-4-yl)-2-oxopropyl phosphate + H2O. The protein operates within amino-acid biosynthesis; L-histidine biosynthesis; L-histidine from 5-phospho-alpha-D-ribose 1-diphosphate: step 6/9. This is Imidazoleglycerol-phosphate dehydratase from Nitrosococcus oceani (strain ATCC 19707 / BCRC 17464 / JCM 30415 / NCIMB 11848 / C-107).